A 71-amino-acid chain; its full sequence is uncharacterized protein (71 aa).

Residues 12–34 (GYLSLTLVTLPVCSSLHCYFLWT) traverse the membrane as a helical segment.

The protein resides in the membrane. This is an uncharacterized protein from Dictyostelium discoideum (Social amoeba).